Reading from the N-terminus, the 22-residue chain is Proline-rich peptide (22 aa).

Positions Phe1–Pro22 are disordered.

It is found in the secreted. Its function is as follows. Antibacterial peptide active against Gram-positive bacterium M.luteus and Gram-negative bacterium E.coli. This Calliphora vicina (Blue blowfly) protein is Proline-rich peptide.